The following is a 539-amino-acid chain: MPGINGAGPSNFFWQWRTDGEPVTEREHDSSRSASSANSPELPPPASPAESGRQRLLRSSALSRQTREWLEATPARVQGATPPAEARQSPEAQQAERIVQELVRGGADLNNVRTMLRNVMDNNAVAFSRVERDILLQHFPNMPMTGISSDSVLANELRQRLRQTVRQQRIQSSTPARLADSSSGSSQRSLIGRSTMLMTPGRSSSSSAAASRTSVDRHPQGLDLESARLASAARHNHSANQTNEALRRLTQEGVDMERLRTSLGRYIMSLEPLPPDLRRALESVGINPFIPEELSLVDHPVLNFSAALNRMLASRQTTTNSPELPPLASSAESGRRRLLRSPPLLSGQREWIEQSMRQEAEPQSSRLNRAVRLAVMPPQNENEDNVAYAIRLRRLNPGADVSRVVASFITDPAARQQVVNDIRAALDIAPQFSQLRTISKADAESEELGFRDAADHPDNATSCLFGEELSLSNPDQQVIGLAVNPTDKPQPYSQEVNKALTFMDMKKLAQYLADKPEHPLNRQRLDAKNIAKYAFKIVP.

Disordered stretches follow at residues 1–93 (MPGI…PEAQ), 163–220 (QTVR…RHPQ), 230–249 (ASAA…LRRL), and 315–336 (RQTT…SGRR). Residues 18–31 (TDGEPVTEREHDSS) are compositionally biased toward basic and acidic residues. Residues 181–194 (SSSGSSQRSLIGRS) show a composition bias toward low complexity.

The protein belongs to the HopAB family.

The protein localises to the secreted. Effector protein that plays different roles depending on the species and plant cultivars that interact with the pathogen. Acts as a virulence determinant by enhancing the development of disease symptoms and bacterial growth. Acts as an avirulence factor by eliciting hypersensitive response (HR) and plant resistance. The chain is Effector protein hopAB1 (hopAB1) from Pseudomonas savastanoi pv. phaseolicola (strain 1448A / Race 6) (Pseudomonas syringae pv. phaseolicola (strain 1448A / Race 6)).